Consider the following 420-residue polypeptide: Putative zinc metalloprotease Lmo1318 (420 aa).

Residue histidine 18 coordinates Zn(2+). Glutamate 19 is a catalytic residue. Histidine 22 provides a ligand contact to Zn(2+). Transmembrane regions (helical) follow at residues 172–194 (TIFA…LAFV), 304–326 (NWIV…LDML), 347–369 (VLNW…LPAL), and 393–412 (GIIH…LVTW). Positions 176–267 (GPLFNFILAI…DGKTQDIDVK (92 aa)) constitute a PDZ domain.

Belongs to the peptidase M50B family. Zn(2+) serves as cofactor.

Its subcellular location is the cell membrane. This chain is Putative zinc metalloprotease Lmo1318, found in Listeria monocytogenes serovar 1/2a (strain ATCC BAA-679 / EGD-e).